We begin with the raw amino-acid sequence, 1073 residues long: Guanylyl cyclase C (1073 aa).

An N-terminal signal peptide occupies residues 1-23; that stretch reads MKTLLLDLALWSLLFQPGWLSFS. The Extracellular segment spans residues 24 to 430; it reads SQVSQNCHNG…PNDITGRGPQ (407 aa). N-linked (GlcNAc...) asparagine glycosylation is found at Asn-32, Asn-75, Asn-79, Asn-195, Asn-284, Asn-307, Asn-345, and Asn-402. Residues 431 to 454 form a helical membrane-spanning segment; the sequence is ILMIAVFTLTGAVVLLLLVALLML. The Cytoplasmic segment spans residues 455–1073; that stretch reads RKYRKDYELR…NTTDKESTYF (619 aa). The Protein kinase domain maps to 489–749; the sequence is LKIDDDKRRD…KIETTLAKIF (261 aa). A Guanylate cyclase domain is found at 824-954; it reads TIYFSDIVGF…DTVNTASRME (131 aa).

This sequence belongs to the adenylyl cyclase class-4/guanylyl cyclase family. As to quaternary structure, homotrimer. Interacts via its C-terminal region with NHERF4. Interacts with the lectin chaperone VIP36. Post-translationally, glycosylation at Asn-75 and/or Asn-79 is required for interaction with VIP36 while glycosylation at Asn-345 and Asn-402 modulates ligand-mediated GUCY2C activation.

The protein localises to the cell membrane. The protein resides in the endoplasmic reticulum membrane. The enzyme catalyses GTP = 3',5'-cyclic GMP + diphosphate. In terms of biological role, guanylyl cyclase that catalyzes synthesis of cyclic GMP (cGMP) from GTP. Receptor for the E.coli heat-stable enterotoxin; E.coli enterotoxin markedly stimulates the accumulation of cGMP in mammalian cells expressing GUCY2C. Also activated by the endogenous peptides guanylin and uroguanylin. The chain is Guanylyl cyclase C from Homo sapiens (Human).